The sequence spans 506 residues: GMP synthase [glutamine-hydrolyzing] (506 aa).

Positions 2-190 constitute a Glutamine amidotransferase type-1 domain; that stretch reads SIVILDFGSQ…FLDICGVTRD (189 aa). Residue cysteine 79 is the Nucleophile of the active site. Catalysis depends on residues histidine 165 and glutamate 167. Residues 191 to 381 enclose the GMPS ATP-PPase domain; sequence WNAEHIVDEL…LGLPDHIRMR (191 aa). 219-225 is an ATP binding site; it reads SGGVDSS.

Homodimer.

The catalysed reaction is XMP + L-glutamine + ATP + H2O = GMP + L-glutamate + AMP + diphosphate + 2 H(+). The protein operates within purine metabolism; GMP biosynthesis; GMP from XMP (L-Gln route): step 1/1. Catalyzes the synthesis of GMP from XMP. The chain is GMP synthase [glutamine-hydrolyzing] (guaA) from Deinococcus radiodurans (strain ATCC 13939 / DSM 20539 / JCM 16871 / CCUG 27074 / LMG 4051 / NBRC 15346 / NCIMB 9279 / VKM B-1422 / R1).